The chain runs to 255 residues: Glutamate racemase (255 aa).

Substrate contacts are provided by residues Asp7–Ser8 and Tyr39–Gly40. The active-site Proton donor/acceptor is the Cys70. Substrate is bound at residue Asn71–Thr72. The active-site Proton donor/acceptor is Cys181. Thr182–His183 provides a ligand contact to substrate.

Belongs to the aspartate/glutamate racemases family.

It carries out the reaction L-glutamate = D-glutamate. It functions in the pathway cell wall biogenesis; peptidoglycan biosynthesis. Its function is as follows. Provides the (R)-glutamate required for cell wall biosynthesis. This is Glutamate racemase from Helicobacter acinonychis (strain Sheeba).